The following is a 319-amino-acid chain: D-ribose/D-allose-binding protein (319 aa).

An N-terminal signal peptide occupies residues 1 to 29 (MKRVASRRLLAAVVLTACSSFLPLSAVHA).

The protein belongs to the bacterial solute-binding protein 2 family.

It is found in the periplasm. Functionally, binds specifically both D-ribose and D-allose, with affinities in the lower micromolar range. The chain is D-ribose/D-allose-binding protein from Pseudomonas aeruginosa (strain ATCC 15692 / DSM 22644 / CIP 104116 / JCM 14847 / LMG 12228 / 1C / PRS 101 / PAO1).